A 471-amino-acid chain; its full sequence is Cysteine--tRNA ligase (471 aa).

Position 29 (Cys29) interacts with Zn(2+). The short motif at 31–41 (PTVYNYIHIGN) is the 'HIGH' region element. Residues Cys209, His234, and Glu238 each contribute to the Zn(2+) site. The 'KMSKS' region signature appears at 266 to 270 (KMSKS). Lys269 lines the ATP pocket.

This sequence belongs to the class-I aminoacyl-tRNA synthetase family. In terms of assembly, monomer. The cofactor is Zn(2+).

It is found in the cytoplasm. The enzyme catalyses tRNA(Cys) + L-cysteine + ATP = L-cysteinyl-tRNA(Cys) + AMP + diphosphate. This chain is Cysteine--tRNA ligase, found in Listeria monocytogenes serovar 1/2a (strain ATCC BAA-679 / EGD-e).